Here is a 256-residue protein sequence, read N- to C-terminus: MANEGEEIELTEFPETEKERKDEEKLSSCSEETTNTSSSSGSDHVPVPIEVNVIIQNSSRTEDELQNSKEIELTGFQGKLSSCSEETTAPSSSYSSKQASVFIEENGDNETSTYRPQNVLTNLNSLYTTFEDARAQGKGMVRHKSEDLQSFLEKYPPDFRKPKRDLSATWDPGMPTPPLPPRPANLGERQASTVRLHVKESNCKQPRERKANERNIVKDLKRLENKINVIICLVVVILAVLLLVTVLSILHIGMKS.

Residues 1–14 (MANEGEEIELTEFP) are compositionally biased toward acidic residues. Positions 1–49 (MANEGEEIELTEFPETEKERKDEEKLSSCSEETTNTSSSSGSDHVPVPI) are disordered. Topologically, residues 1 to 228 (MANEGEEIEL…DLKRLENKIN (228 aa)) are cytoplasmic. Residues 15 to 26 (ETEKERKDEEKL) are compositionally biased toward basic and acidic residues. Low complexity predominate over residues 27-42 (SSCSEETTNTSSSSGS). Residue Tyr-114 is modified to Phosphotyrosine; by host LCK. Phosphotyrosine; by host is present on Tyr-127. A CSKH/LBD2 region spans residues 146–155 (EDLQSFLEKY). Residues 162–183 (PKRDLSATWDPGMPTPPLPPRP) are disordered. Residues 174–183 (MPTPPLPPRP) form an SH3B/LBD1 region. The span at 174-183 (MPTPPLPPRP) shows a compositional bias: pro residues. Residues 229–249 (VIICLVVVILAVLLLVTVLSI) form a helical membrane-spanning segment. Residues 250 to 256 (LHIGMKS) are Extracellular-facing.

As to quaternary structure, binds host LCK, human WDR48 and human NXF1/TAP. Forms a complex with activated LCK and STAT1 and STAT3. In terms of processing, phosphorylation on Tyr-114 acts as a docking site for the recruitment of STATs 1 and 3.

Its subcellular location is the host cell membrane. Its function is as follows. Plays a critical role in virus induced T-cell transformation. Binds to T-cell-specific tyrosine kinase LCK SH2 and SH3 domains, thereby activating its kinase activity. Once phosphorylated by host LCK, forms a complex with at least STAT 1 and 3, resulting on the phosphorylation of STAT3 and presumably STAT1, and their migration into the nucleus to induce transcription of target genes. Stimulates host ILF3/NF-AT-90 activity. Association with host NXF1/TAP transduces the signal up-regulating surface expression of adhesion molecules as well as activating NF-kappa-B activity. Acts synergistically with StpC to stimulate NF-kappa-B activity and interleukin-2 gene expression. Activation of NF-kappa-B protects lymphocytes from apoptosis, thereby facilitating viral induced cell transformation. May cause down-regulation of host LCK and cell apoptosis when stably overexpressed ex vivo. Interaction with WDR48 induce degradation of T-cell receptor in a lysosome-dependent fashion, when both proteins are overexpressed. The biological effect of this interaction remains controversial since no T-cell receptor degradation is observed in infected cells. The chain is Tyrosine-protein kinase-interacting protein from Saimiri sciureus (Common squirrel monkey).